The primary structure comprises 477 residues: Adenylyl cyclase-associated protein 2 (477 aa).

Position 2 is an N-acetylalanine (Ala-2). 2 disordered regions span residues 224 to 262 (SILS…PSRS) and 274 to 324 (ITKG…HAPV). Residues 231–248 (GLPPPPPPPPPPGPPPPF) are compositionally biased toward pro residues. The span at 300 to 318 (RSPTKTRTPSPTSSKSNSP) shows a compositional bias: low complexity. Phosphoserine occurs at positions 301 and 309. The 138-residue stretch at 318–455 (PQKHAPVLEL…QGDDYREFPI (138 aa)) folds into the C-CAP/cofactor C-like domain.

This sequence belongs to the CAP family. Found at relatively high levels in testes, at moderate levels in brain, heart and skeletal muscle, at lower levels in lung, skin, kidney and small intestine, and is undetectable in liver or spleen.

It is found in the cell membrane. Its function is as follows. Involved in the regulation of actin polymerization. The protein is Adenylyl cyclase-associated protein 2 (Cap2) of Rattus norvegicus (Rat).